The sequence spans 393 residues: Inulin fructotransferase [DFA-I-forming] (393 aa).

It carries out the reaction Produces alpha-D-fructofuranose beta-D-fructofuranose 1,2':2,1'-dianhydride (DFA I) by successively eliminating the diminishing (2-&gt;1)-beta-D-fructan (inulin) chain from the terminal D-fructosyl-D-fructosyl disaccharide.. In Arthrobacter globiformis, this protein is Inulin fructotransferase [DFA-I-forming].